The primary structure comprises 200 residues: LHFPL tetraspan subfamily member 6 protein (200 aa).

An N-terminal signal peptide occupies residues 1–21 (MASSLTCAGVIWALLSFLCAA). Transmembrane regions (helical) follow at residues 84–104 (ICTV…LTAI) and 123–143 (GIQF…PLGW). A glycan (N-linked (GlcNAc...) asparagine) is linked at N154. Residues 172 to 192 (CTGAGAAAAMVLCTWMACFAG) form a helical membrane-spanning segment.

This sequence belongs to the LHFP family.

Its subcellular location is the membrane. This Danio rerio (Zebrafish) protein is LHFPL tetraspan subfamily member 6 protein.